A 501-amino-acid polypeptide reads, in one-letter code: Tetrachloroethene reductive dehalogenase (501 aa).

A signal peptide (tat-type signal) is located at residues 1 to 37 (MEKKKKPELSRRDFGKLIIGGGAAATIAPFGVPGANA). Corrinoid-binding positions include alanine 74, tyrosine 207, 309-314 (NGVGQS), 329-332 (MGAC), and 341-343 (VRL). A 4Fe-4S ferredoxin-type 1 domain is found at 356-386 (KPIDFGVTEFCETCKKCARECPSKAITEGPR). [4Fe-4S] cluster-binding residues include cysteine 366, cysteine 369, cysteine 372, and cysteine 376. 394–401 (HNQSGKLQ) lines the corrinoid pocket. Position 409 (cysteine 409) interacts with [4Fe-4S] cluster. Position 419 (tyrosine 419) interacts with corrinoid. [4Fe-4S] cluster contacts are provided by cysteine 420, cysteine 423, and cysteine 427. A 4Fe-4S ferredoxin-type 2 domain is found at 420-439 (CGVCVAVCPFTKGNIWIHDG).

The protein belongs to the PceA family. As to quaternary structure, monomer. It depends on [4Fe-4S] cluster as a cofactor. The cofactor is corrinoid. In terms of processing, predicted to be exported by the Tat system. The position of the signal peptide cleavage has not been experimentally proven.

The protein localises to the cytoplasm. It localises to the cell inner membrane. The catalysed reaction is trichloroethene + chloride + A + H(+) = tetrachloroethene + AH2. It carries out the reaction trichloroethene + AH2 = (Z)-1,2-dichloroethene + chloride + A + H(+). With respect to regulation, both the processed and unprocessed enzymes are catalytically active. PCE-dependent growth and PceA activity are inhibited in the presence of high concentrations of 5,6-dimethylbenzimidazole (DMB), probably due to the formation a DMB-containing nor-B12 cofactor. Dechlorination of PCE is stimulated by ammonium ions. Activity is inhibited by chlorinated methanes. Its function is as follows. Catalyzes the reductive dechlorination of tetrachloroethene (PCE) to trichloroethene (TCE) and of trichloroethene to cis-1,2-dichloroethene (DCE). In addition, trans-1,3-dichloropropene, 1,1,3-trichloropropene and 2,3-dichloropropene are reduced to a mixture of mono-chloropropenes, 1,1-dichloropropene, and 2-chloropropene, respectively. Is also able to convert brominated phenols such as 4-bromophenol (4-BP), 2,4-dibromophenol (2,4-DBP) and 2,4,6-tribromophenol (2,4,6-TBP). Utilizes formate or pyruvate as electron donors. Titanium(III) citrate could also serve as electron donor. Reduced methyl viologen can act as the artificial electron donor. In Sulfurospirillum multivorans (Dehalospirillum multivorans), this protein is Tetrachloroethene reductive dehalogenase.